Reading from the N-terminus, the 60-residue chain is Large ribosomal subunit protein uL30 (60 aa).

It belongs to the universal ribosomal protein uL30 family. As to quaternary structure, part of the 50S ribosomal subunit.

This Streptococcus pyogenes serotype M1 protein is Large ribosomal subunit protein uL30.